Consider the following 290-residue polypeptide: Glutaredoxin domain-containing cysteine-rich protein 1 (290 aa).

Residues 127–234 (LQQPSTDLEF…DILTKIERVQ (108 aa)) form the Glutaredoxin domain.

This sequence belongs to the GRXCR1 family. Expressed at low levels in adult lung, brain and duodenum with moderate levels in testis. Highly expressed in fetal cochlea.

The protein resides in the cell projection. It localises to the stereocilium. Its subcellular location is the microvillus. The protein localises to the kinocilium. May play a role in actin filament architecture in developing stereocilia of sensory cells. This Homo sapiens (Human) protein is Glutaredoxin domain-containing cysteine-rich protein 1 (GRXCR1).